The chain runs to 156 residues: Endogenous retrovirus group K member 25 Pro protein (156 aa).

The Peptidase A2 domain maps to 21–96 (FEGLVDTGAD…IPLNLWGRDL (76 aa)). Asp26 is an active-site residue. Positions 111 to 156 (YSPTSQKIMTKMGYIPGKGLGKNEDGIKIPVEAKINQKREGIGYPF) constitute a G-patch domain.

This sequence belongs to the peptidase A2 family. HERV class-II K(HML-2) subfamily. In terms of assembly, active as a homodimer. In terms of processing, autoproteolytically processed at the N-terminus. Expected C-terminal autoprocessing not detected. The sequence shown is that of the processed Pro protein.

The enzyme catalyses Processing at the authentic HIV-1 PR recognition site and release of the mature p17 matrix and the p24 capsid protein, as a result of the cleavage of the -SQNY-|-PIVQ- cleavage site.. Its function is as follows. Retroviral proteases have roles in processing of the primary translation products and the maturation of the viral particle. Endogenous Pro proteins may have kept, lost or modified their original function during evolution. This endogenous protein has retained most of the characteristics of retroviral proteases. The chain is Endogenous retrovirus group K member 25 Pro protein (ERVK-25) from Homo sapiens (Human).